Reading from the N-terminus, the 478-residue chain is Cysteine--tRNA ligase (478 aa).

Residue C29 participates in Zn(2+) binding. The 'HIGH' region signature appears at 31-41 (VTVYDYCHLGH). Residues C213, H238, and E242 each contribute to the Zn(2+) site. Positions 270–274 (KMSKS) match the 'KMSKS' region motif. Residue K273 coordinates ATP.

This sequence belongs to the class-I aminoacyl-tRNA synthetase family. In terms of assembly, monomer. Zn(2+) serves as cofactor.

It localises to the cytoplasm. The catalysed reaction is tRNA(Cys) + L-cysteine + ATP = L-cysteinyl-tRNA(Cys) + AMP + diphosphate. The chain is Cysteine--tRNA ligase from Synechococcus sp. (strain ATCC 27144 / PCC 6301 / SAUG 1402/1) (Anacystis nidulans).